The sequence spans 451 residues: Glyceraldehyde-3-phosphate dehydrogenase B, chloroplastic (451 aa).

The N-terminal 83 residues, 1–83, are a transit peptide targeting the chloroplast; it reads MASHAALAPS…AAPVRGETVA (83 aa). NADP(+) contacts are provided by residues 94 to 95, aspartate 118, and arginine 163; that span reads RI. Residues 237-239, threonine 268, arginine 283, 296-297, and arginine 319 contribute to the D-glyceraldehyde 3-phosphate site; these read SCT and TG. Catalysis depends on cysteine 238, which acts as the Nucleophile. NADP(+) is bound at residue asparagine 402.

This sequence belongs to the glyceraldehyde-3-phosphate dehydrogenase family. In terms of assembly, tetramer of either four A chains (GAPDH 2) or two A and two B chains (GAPDH 1).

It localises to the plastid. It is found in the chloroplast. The enzyme catalyses D-glyceraldehyde 3-phosphate + phosphate + NADP(+) = (2R)-3-phospho-glyceroyl phosphate + NADPH + H(+). It participates in carbohydrate biosynthesis; Calvin cycle. The chain is Glyceraldehyde-3-phosphate dehydrogenase B, chloroplastic (GAPB) from Spinacia oleracea (Spinach).